Here is a 157-residue protein sequence, read N- to C-terminus: Small ribosomal subunit protein uS7 (157 aa).

It belongs to the universal ribosomal protein uS7 family. In terms of assembly, part of the 30S ribosomal subunit. Contacts proteins S9 and S11.

In terms of biological role, one of the primary rRNA binding proteins, it binds directly to 16S rRNA where it nucleates assembly of the head domain of the 30S subunit. Is located at the subunit interface close to the decoding center, probably blocks exit of the E-site tRNA. This chain is Small ribosomal subunit protein uS7, found in Leptospira borgpetersenii serovar Hardjo-bovis (strain JB197).